The primary structure comprises 210 residues: Large ribosomal subunit protein bL25 (210 aa).

Belongs to the bacterial ribosomal protein bL25 family. CTC subfamily. Part of the 50S ribosomal subunit; part of the 5S rRNA/L5/L18/L25 subcomplex. Contacts the 5S rRNA. Binds to the 5S rRNA independently of L5 and L18.

Functionally, this is one of the proteins that binds to the 5S RNA in the ribosome where it forms part of the central protuberance. In Saccharophagus degradans (strain 2-40 / ATCC 43961 / DSM 17024), this protein is Large ribosomal subunit protein bL25.